We begin with the raw amino-acid sequence, 316 residues long: MQASELTPKWYVAPVSIKDEAVVKNLKAKIQALGFNHEIVDVKVLKEREVHEEVYSLKSGKLPRSLKNTTFNKWFVLDDYRYLRVKISEKNLLGRYIYIKMIYSEDAWRIVRNFPGITGIVGSSGRGALPIPLDEKDANNLEQMLKGISINPSKRIMLTNTAIIEMDSDKFDEKFQYILKQKQAIQKPKEDEDSEIVDAEKLKEAFKKLQNSQEQDEWKEKATIIQSEQTKLDPSVLVPFLGKYEILDTDNKVEQLFEFSVGNLVEVHLTDTIHVQGQIKALYQGTVNKAVVEIELTSKTQLINLPLENLSFVEFE.

The protein belongs to the NusG family.

Participates in transcription elongation, termination and antitermination. The protein is Transcription termination/antitermination protein NusG of Mycoplasma genitalium (strain ATCC 33530 / DSM 19775 / NCTC 10195 / G37) (Mycoplasmoides genitalium).